The following is a 695-amino-acid chain: Putative ATP-dependent RNA helicase L540 (695 aa).

A Helicase ATP-binding domain is found at 53–219; it reads LSALENYQLV…FNSVDSTVID (167 aa). 66–73 contacts ATP; sequence SSTGSGKS. A DEAH box motif is present at residues 164–167; that stretch reads DEAH. Residues 247-434 form the Helicase C-terminal domain; it reads LIEDLIHQQI…GINMMNQLMD (188 aa).

Belongs to the DEAD box helicase family. DEAH subfamily.

It localises to the virion. It catalyses the reaction ATP + H2O = ADP + phosphate + H(+). This Acanthamoeba polyphaga (Amoeba) protein is Putative ATP-dependent RNA helicase L540.